Here is a 108-residue protein sequence, read N- to C-terminus: MFAVIKTGSKQYRVAKDSIIKIEKIDGEPGSTIEFKEVLMIGEYSKPSFIGTPIVKGASVTAQILNQLRNQKVIVFKKKRRKNYRNKRGHKQEVTQVKIIDIAKASNC.

It belongs to the bacterial ribosomal protein bL21 family. Part of the 50S ribosomal subunit. Contacts protein L20.

Functionally, this protein binds to 23S rRNA in the presence of protein L20. This Orientia tsutsugamushi (strain Ikeda) (Rickettsia tsutsugamushi) protein is Large ribosomal subunit protein bL21.